Reading from the N-terminus, the 519-residue chain is Ribonuclease Y (519 aa).

A helical transmembrane segment spans residues 3–23 (PLAILISILLSLFCLVVGYYV). One can recognise a KH domain in the interval 209–272 (TVSVVNLPND…ETARIALDKL (64 aa)). Positions 335-428 (VLKHSMEVAF…VAAADALSAA (94 aa)) constitute an HD domain.

It belongs to the RNase Y family.

It is found in the cell membrane. Endoribonuclease that initiates mRNA decay. In Bacillus licheniformis (strain ATCC 14580 / DSM 13 / JCM 2505 / CCUG 7422 / NBRC 12200 / NCIMB 9375 / NCTC 10341 / NRRL NRS-1264 / Gibson 46), this protein is Ribonuclease Y.